Reading from the N-terminus, the 397-residue chain is Keratinocyte differentiation factor 1 (397 aa).

The segment covering 1–16 has biased composition (pro residues); sequence MPRPGQPRPSSGPPRL. Disordered stretches follow at residues 1 to 67, 130 to 158, and 192 to 214; these read MPRP…SAEP, EHNG…MGSS, and LAEP…RGSE. Positions 44-55 are enriched in basic and acidic residues; it reads RPDPKDPGHHGP. Over residues 201–211 the composition is skewed to polar residues; that stretch reads SLPSTFTNSPR. Ser-218 carries the phosphoserine modification. 2 disordered regions span residues 304 to 339 and 361 to 392; these read ISTR…TMLG and ARKL…GAPL. Positions 321 to 330 are enriched in low complexity; it reads ARSTAPAAAP. The span at 375–388 shows a compositional bias: polar residues; the sequence is SQDSSFQGTDTDSS.

Its subcellular location is the cytoplasm. The protein localises to the cell junction. Functionally, plays a role in the regulation of the epidermis formation during early development. Required both as an inhibitor of basal cell proliferation and a promoter of differentiation of basal progenitor cell progeny. The polypeptide is Keratinocyte differentiation factor 1 (Kdf1) (Mus musculus (Mouse)).